The chain runs to 484 residues: Aspartyl/glutamyl-tRNA(Asn/Gln) amidotransferase subunit B (484 aa).

This sequence belongs to the GatB/GatE family. GatB subfamily. Heterotrimer of A, B and C subunits.

The catalysed reaction is L-glutamyl-tRNA(Gln) + L-glutamine + ATP + H2O = L-glutaminyl-tRNA(Gln) + L-glutamate + ADP + phosphate + H(+). It carries out the reaction L-aspartyl-tRNA(Asn) + L-glutamine + ATP + H2O = L-asparaginyl-tRNA(Asn) + L-glutamate + ADP + phosphate + 2 H(+). Functionally, allows the formation of correctly charged Asn-tRNA(Asn) or Gln-tRNA(Gln) through the transamidation of misacylated Asp-tRNA(Asn) or Glu-tRNA(Gln) in organisms which lack either or both of asparaginyl-tRNA or glutaminyl-tRNA synthetases. The reaction takes place in the presence of glutamine and ATP through an activated phospho-Asp-tRNA(Asn) or phospho-Glu-tRNA(Gln). The protein is Aspartyl/glutamyl-tRNA(Asn/Gln) amidotransferase subunit B of Bordetella pertussis (strain Tohama I / ATCC BAA-589 / NCTC 13251).